A 79-amino-acid chain; its full sequence is Protein AC4 (79 aa).

Disordered stretches follow at residues 1 to 24 and 36 to 79; these read MCSY…SPQP and LNPA…MPRR. A compositionally biased stretch (low complexity) spans 38-47; sequence PAPTSSPTST. Over residues 48–61 the composition is skewed to polar residues; sequence RTEIQLNGENSRST.

The protein belongs to the geminiviridae protein AC4/C4 family.

Functionally, pathogenicity determinant. May act as a suppressor of RNA-mediated gene silencing, also known as post-transcriptional gene silencing (PTGS), a mechanism of plant viral defense that limits the accumulation of viral RNAs. The sequence is that of Protein AC4 from Abutilon (Upland cotton).